Consider the following 447-residue polypeptide: C4-dicarboxylate transport protein (447 aa).

8 helical membrane-spanning segments follow: residues 19–39 (ILYV…HFYP), 55–75 (LVKM…IAGL), 90–110 (IYFL…ANVV), 155–175 (AFAS…GIAL), 199–219 (LVAI…AFTI), 232–252 (MLVG…LGLV), 343–363 (LLLV…AGFI), and 366–386 (AATL…ILGV).

It belongs to the dicarboxylate/amino acid:cation symporter (DAACS) (TC 2.A.23) family.

It localises to the cell inner membrane. In terms of biological role, responsible for the transport of dicarboxylates such as succinate, fumarate, and malate from the periplasm across the membrane. The protein is C4-dicarboxylate transport protein of Rhodospirillum rubrum (strain ATCC 11170 / ATH 1.1.1 / DSM 467 / LMG 4362 / NCIMB 8255 / S1).